Here is a 301-residue protein sequence, read N- to C-terminus: Protein ARMCX6 (301 aa).

Residues 1–6 (MGRARE) are mitochondrion outer membrane (MOM)-targeting sequence. The Mitochondrial intermembrane portion of the chain corresponds to 1-7 (MGRAREM). Residues 8 to 25 (GWMAAGLMIGAGACYCMY) traverse the membrane as a helical; Signal-anchor segment. The segment at 26–36 (KLTMGRSEGNE) is mitochondrion outer membrane (MOM)-targeting sequence. Residues 26–301 (KLTMGRSEGN…REMLVEAISP (276 aa)) lie on the Cytoplasmic side of the membrane. Residues 69–101 (WSEDGDWDEPGAPGGTEDRRSGGGKANRAHPIK) are disordered.

This sequence belongs to the eutherian X-chromosome-specific Armcx family. In terms of tissue distribution, highly expressed in the developing neural tissues, neural crest derivatives and hind limbs. Also widely expressed in the adult nervous tissue, especially in the forebrain, including the cerebral cortex, hippocampus and thalamus.

It is found in the mitochondrion. It localises to the mitochondrion outer membrane. In terms of biological role, may regulate the dynamics and distribution of mitochondria in neural cells. The polypeptide is Protein ARMCX6 (Armcx6) (Mus musculus (Mouse)).